A 147-amino-acid chain; its full sequence is S-protein homolog 10 (147 aa).

The N-terminal stretch at 1–20 is a signal peptide; it reads MNCFSYFFLVIILCAGLNNA.

It belongs to the plant self-incompatibility (S1) protein family.

The protein resides in the secreted. This is S-protein homolog 10 from Arabidopsis thaliana (Mouse-ear cress).